A 752-amino-acid polypeptide reads, in one-letter code: MTISPPEREEKKARVIVDNDPVPTSFERWAKPGHFDRSLARGPKTTTWIWNLHALAHDFDTHTSDLEDISRKIFSAHFGHLAVVMVWLSGMIFHGAKFSNYEAWLSDPLNVKPSAQVVWPIVGQDILNGDVGGGFHGIQITSGLFQVWRGWGITNSFQLYVTAIGGLVLAGLFLFAGWFHYHKRAPKLEWFQNVESMLNHHLQVLLGCGSLGWAGHLIHVSAPTNKLLDAGVALKDIPLPHEFILNKDLLTELYPSFAAGLAPFFTLNWGQYADFLTFKGGLNPVTGGLWMTDIAHHHLAIAVLFIVAGHQYRTNWGIGHSIREILENHKGPFTGEGHKGLYENLTTSWHAQLATNLAFLGSLTIIIAHHMYAMPPYPYLATDYATQLCIFTHHIWIGGFLIVGGAAHAAIFMVRDYDPVVNQNNVLDRVLRHRDAIISHLNWVCIFLGFHSFGLYIHNDTMRALGRPQDLFSDTGIQLQPVFAQWIQNIHALAPGTTAPNALEPVSYVFGGGILAVGGKVAAAPIALGTADFLIHHIHAFTIHVTVLILLKGVLYARSSRLIPDKANLGFRFPCDGPGRGGTCQVSGWDHVFLGLFWMYNSLSIVIFHFSWKMQSDVWGTVDADGTVTHITGGNFAQSAITINGWLRDFLWAQATQVINSYGSALSAYGLLFLGAHFVWAFSLMFLFSGRGYWQELIESIVWAHNKLKVAPAIQPRALSIIQGRAVGVAHYLLGGIATTWAFFHAHILSVG.

The next 8 helical transmembrane spans lie at Ile73–Ala96, Leu159–His182, Leu198–Ala222, Ile294–Tyr312, Trp349–Tyr372, Leu388–Val414, Ala436–His458, and Phe533–Leu551. Positions 575 and 584 each coordinate [4Fe-4S] cluster. Helical transmembrane passes span His591–Trp612 and Leu666–Phe688. Position 677 (His677) interacts with chlorophyll a'. Residues Met685 and Tyr693 each contribute to the chlorophyll a site. A phylloquinone-binding site is contributed by Trp694. The helical transmembrane segment at Ala726–Ala746 threads the bilayer.

Belongs to the PsaA/PsaB family. The PsaA/B heterodimer binds the P700 chlorophyll special pair and subsequent electron acceptors. PSI consists of a core antenna complex that captures photons, and an electron transfer chain that converts photonic excitation into a charge separation. The cyanobacterial PSI reaction center is composed of one copy each of PsaA,B,C,D,E,F,I,J,K,L,M and X, and forms trimeric complexes. PSI electron transfer chain: 5 chlorophyll a, 1 chlorophyll a', 2 phylloquinones and 3 4Fe-4S clusters. PSI core antenna: 90 chlorophyll a, 22 carotenoids, 3 phospholipids and 1 galactolipid. P700 is a chlorophyll a/chlorophyll a' dimer, A0 is one or more chlorophyll a, A1 is one or both phylloquinones and FX is a shared 4Fe-4S iron-sulfur center. is required as a cofactor.

It localises to the cellular thylakoid membrane. The enzyme catalyses reduced [plastocyanin] + hnu + oxidized [2Fe-2S]-[ferredoxin] = oxidized [plastocyanin] + reduced [2Fe-2S]-[ferredoxin]. Functionally, psaA and PsaB bind P700, the primary electron donor of photosystem I (PSI), as well as the electron acceptors A0, A1 and FX. PSI is a plastocyanin/cytochrome c6-ferredoxin oxidoreductase, converting photonic excitation into a charge separation, which transfers an electron from the donor P700 chlorophyll pair to the spectroscopically characterized acceptors A0, A1, FX, FA and FB in turn. Oxidized P700 is reduced on the lumenal side of the thylakoid membrane by plastocyanin or cytochrome c6. The chain is Photosystem I P700 chlorophyll a apoprotein A1 from Nostoc punctiforme (strain ATCC 29133 / PCC 73102).